The chain runs to 152 residues: Phosphopantetheine adenylyltransferase (152 aa).

Position 9 (Ser-9) interacts with substrate. ATP is bound by residues 9 to 10 (SF) and His-17. Substrate-binding residues include Lys-41, Thr-73, and Arg-87. ATP is bound by residues 88–90 (GLR), Glu-98, and 122–128 (TSFISSS).

It belongs to the bacterial CoaD family. As to quaternary structure, homohexamer. It depends on Mg(2+) as a cofactor.

It localises to the cytoplasm. It catalyses the reaction (R)-4'-phosphopantetheine + ATP + H(+) = 3'-dephospho-CoA + diphosphate. The protein operates within cofactor biosynthesis; coenzyme A biosynthesis; CoA from (R)-pantothenate: step 4/5. Reversibly transfers an adenylyl group from ATP to 4'-phosphopantetheine, yielding dephospho-CoA (dPCoA) and pyrophosphate. This chain is Phosphopantetheine adenylyltransferase, found in Flavobacterium johnsoniae (strain ATCC 17061 / DSM 2064 / JCM 8514 / BCRC 14874 / CCUG 350202 / NBRC 14942 / NCIMB 11054 / UW101) (Cytophaga johnsonae).